Reading from the N-terminus, the 327-residue chain is Gonadotropin-releasing hormone receptor (327 aa).

At 1-38 (MANNASLEQDPNHCSAINNSIPLIQGKLPTLTVSGKIR) the chain is on the extracellular side. N-linked (GlcNAc...) asparagine glycans are attached at residues Asn-4 and Asn-18. Residues 39–58 (VTVTFFLFLLSTAFNASFLL) form a helical membrane-spanning segment. Topologically, residues 59 to 77 (KLQKWTQKRKKGKKLSRMK) are cytoplasmic. Residues 78–97 (VLLKHLTLANLLETLIVMPL) form a helical membrane-spanning segment. Over 98-115 (DGMWNITVQWYAGEFLCK) the chain is Extracellular. N-linked (GlcNAc...) asparagine glycosylation is present at Asn-102. Residues Cys-114 and Cys-195 are joined by a disulfide bond. Residues 116–137 (VLSYLKLFSMYAPAFMMVVISL) form a helical membrane-spanning segment. Residues 138-164 (DRSLAITQPLAVQSNSKLEQSMISLAW) are Cytoplasmic-facing. The helical transmembrane segment at 165–184 (ILSIVFAGPQLYIFRMIYLA) threads the bilayer. Over 185 to 211 (DGSGPTVFSQCVTHCSFPQWWHQAFYN) the chain is Extracellular. The chain crosses the membrane as a helical span at residues 212–231 (FFTFGCLFIIPLLIMLICNA). The Cytoplasmic segment spans residues 232-280 (KIIFALTRVLHQDPRKLQLNQSKNNIPRARLRTLKMTVAFATSFVVCWT). The helical transmembrane segment at 281–299 (PYYVLGIWYWFDPEMLNRV) threads the bilayer. Residues 300-305 (SEPVNH) lie on the Extracellular side of the membrane. The chain crosses the membrane as a helical span at residues 306 to 325 (FFFLFAFLNPCFDPLIYGYF). Over 326-327 (SL) the chain is Cytoplasmic.

The protein belongs to the G-protein coupled receptor 1 family. In terms of tissue distribution, pituitary gland.

It is found in the cell membrane. Its function is as follows. Receptor for gonadotropin releasing hormone (GnRH) that mediates the action of GnRH to stimulate the secretion of the gonadotropic hormones luteinizing hormone (LH) and follicle-stimulating hormone (FSH). This receptor mediates its action by association with G-proteins that activate a phosphatidylinositol-calcium second messenger system. This chain is Gonadotropin-releasing hormone receptor (Gnrhr), found in Mus musculus (Mouse).